The sequence spans 148 residues: Single-stranded DNA-binding protein, mitochondrial (148 aa).

A mitochondrion-targeting transit peptide spans 1 to 16 (MFRRPALQVLRQFVRH). In terms of domain architecture, SSB spans 30–141 (LNRVQLLGRV…IIADNIVFLS (112 aa)). Residues S67 and S79 each carry the phosphoserine modification. An N6-acetyllysine modification is found at K113. K122 bears the N6-succinyllysine mark.

As to quaternary structure, homotetramer. Interacts with MPG/AAG, through inhibition of its glycosylase activity it potentially prevents formation of DNA breaks in ssDNA, ensuring that base removal primarily occurs in dsDNA. Interacts with POLDIP2. Interacts with PRIMPOL.

Its subcellular location is the mitochondrion. It is found in the mitochondrion matrix. The protein resides in the mitochondrion nucleoid. Functionally, binds preferentially and cooperatively to pyrimidine rich single-stranded DNA (ss-DNA). In vitro, required to maintain the copy number of mitochondrial DNA (mtDNA) and plays a crucial role during mtDNA replication by stimulating the activity of the replisome components POLG and TWNK at the replication fork. Promotes the activity of the gamma complex polymerase POLG, largely by organizing the template DNA and eliminating secondary structures to favor ss-DNA conformations that facilitate POLG activity. In addition it is able to promote the 5'-3' unwinding activity of the mtDNA helicase TWNK. May also function in mtDNA repair. This is Single-stranded DNA-binding protein, mitochondrial (SSBP1) from Oryctolagus cuniculus (Rabbit).